The primary structure comprises 618 residues: uncharacterized protein (618 aa).

The zn(2)-C6 fungal-type DNA-binding region spans 18-47 (SCQRCRQRKIKCDRLHPCFQCVKSNSQCFY). Serine 598 is modified (phosphoserine).

The protein localises to the nucleus. This is an uncharacterized protein from Schizosaccharomyces pombe (strain 972 / ATCC 24843) (Fission yeast).